The chain runs to 387 residues: Protein RecA, chromosomal (387 aa).

80–87 is an ATP binding site; sequence GPESSGKT. The disordered stretch occupies residues 352–387; sequence EVAETTEDTSTKAKATKAKKEEKVVETEEIELELED. Acidic residues predominate over residues 378–387; sequence TEEIELELED.

Belongs to the RecA family.

The protein localises to the cytoplasm. Its function is as follows. Can catalyze the hydrolysis of ATP in the presence of single-stranded DNA, the ATP-dependent uptake of single-stranded DNA by duplex DNA, and the ATP-dependent hybridization of homologous single-stranded DNAs. It interacts with LexA causing its activation and leading to its autocatalytic cleavage. In Lactococcus lactis subsp. lactis (strain IL1403) (Streptococcus lactis), this protein is Protein RecA, chromosomal.